We begin with the raw amino-acid sequence, 81 residues long: Toxin-like peptide AaF1CA5 (81 aa).

Positions 1–22 (MMKLMLFSIIVILFSLIGSIHG) are cleaved as a signal peptide. An LCN-type CS-alpha/beta domain is found at 25–81 (VPGNYPLDSSDDTYLCAPLGENPFCIKICRKHGVKYGLMLRLPCWCEYFGKIKNVKI). 2 cysteine pairs are disulfide-bonded: Cys-49–Cys-68 and Cys-53–Cys-70.

It belongs to the long (3 C-C) scorpion toxin superfamily. In terms of tissue distribution, expressed by the venom gland.

The protein resides in the secreted. In terms of biological role, probable neurotoxin that inhibits ion channels. This is Toxin-like peptide AaF1CA5 from Androctonus australis (Sahara scorpion).